Reading from the N-terminus, the 463-residue chain is Glycine--tRNA ligase (463 aa).

Substrate-binding residues include Arg98 and Glu174. Residues 206-208 (RNE), 216-221 (FRTREF), 290-291 (EL), and 334-337 (GADR) each bind ATP. 221–225 (FEQME) is a substrate binding site. 330–334 (EPSLG) provides a ligand contact to substrate.

The protein belongs to the class-II aminoacyl-tRNA synthetase family. Homodimer.

The protein localises to the cytoplasm. The enzyme catalyses tRNA(Gly) + glycine + ATP = glycyl-tRNA(Gly) + AMP + diphosphate. Its function is as follows. Catalyzes the attachment of glycine to tRNA(Gly). The protein is Glycine--tRNA ligase of Staphylococcus aureus (strain bovine RF122 / ET3-1).